Consider the following 235-residue polypeptide: Cell division protein FtsQ (235 aa).

The Cytoplasmic portion of the chain corresponds to 1 to 6; that stretch reads MERLTR. The chain crosses the membrane as a helical span at residues 7–25; sequence WLLVMMAMLLAASGLVWFY. The Periplasmic segment spans residues 26 to 235; it reads NSNHLPVKQV…DGLPEKESEE (210 aa). The POTRA domain occupies 30-99; that stretch reads LPVKQVSLKG…DTVEVVLTER (70 aa).

It belongs to the FtsQ/DivIB family. FtsQ subfamily. Part of a complex composed of FtsB, FtsL and FtsQ.

It is found in the cell inner membrane. Its function is as follows. Essential cell division protein. May link together the upstream cell division proteins, which are predominantly cytoplasmic, with the downstream cell division proteins, which are predominantly periplasmic. May control correct divisome assembly. In Neisseria meningitidis serogroup B (strain ATCC BAA-335 / MC58), this protein is Cell division protein FtsQ.